Consider the following 528-residue polypeptide: D-3-phosphoglycerate dehydrogenase (528 aa).

Residues 151-152 (RI), aspartate 171, 230-232 (AAR), and aspartate 256 contribute to the NAD(+) site. Arginine 232 is an active-site residue. The active site involves glutamate 261. Histidine 279 acts as the Proton donor in catalysis. 279 to 282 (HLGA) contacts NAD(+). The ACT domain maps to 455-527 (NLIIHYVDRP…DAYKLEVVDL (73 aa)).

Belongs to the D-isomer specific 2-hydroxyacid dehydrogenase family.

It carries out the reaction (2R)-3-phosphoglycerate + NAD(+) = 3-phosphooxypyruvate + NADH + H(+). It catalyses the reaction (R)-2-hydroxyglutarate + NAD(+) = 2-oxoglutarate + NADH + H(+). The protein operates within amino-acid biosynthesis; L-serine biosynthesis; L-serine from 3-phospho-D-glycerate: step 1/3. Catalyzes the reversible oxidation of 3-phospho-D-glycerate to 3-phosphonooxypyruvate, the first step of the phosphorylated L-serine biosynthesis pathway. Also catalyzes the reversible oxidation of 2-hydroxyglutarate to 2-oxoglutarate. In Mycobacterium bovis (strain ATCC BAA-935 / AF2122/97), this protein is D-3-phosphoglycerate dehydrogenase (serA).